Here is a 1601-residue protein sequence, read N- to C-terminus: Rap guanine nucleotide exchange factor 6 (1601 aa).

Met-1 carries the N-acetylmethionine modification. Disordered regions lie at residues 1-22 (MNSPVDPGARQALRKKPPERTP) and 179-250 (PHPQ…QGRD). At Ser-3 the chain carries Phosphoserine. A compositionally biased stretch (low complexity) spans 187-205 (SSSQSGCSIASDSGSSSLS). Residues 228 to 241 (VDSEDDEEEDEEID) are compositionally biased toward acidic residues. An a nucleoside 3',5'-cyclic phosphate-binding site is contributed by 280-399 (AFANMTMSVR…VEEEGEIVMV (120 aa)). The region spanning 412–526 (KGHIVIKATP…LLNIACAAKA (115 aa)) is the N-terminal Ras-GEF domain. The 86-residue stretch at 530–615 (QVVLQKASRE…LTVKTNIFVF (86 aa)) folds into the PDZ domain. Residues 749-835 (PDQVIRVFKV…GRYYLKNNME (87 aa)) form the Ras-associating domain. In terms of domain architecture, Ras-GEF spans 860–1088 (STIEVATQLS…LDVQGGAHKK (229 aa)). Disordered regions lie at residues 1192 to 1274 (IRKK…SRSS), 1302 to 1324 (ESTGALEKTEHASGIGDHSQHGP), 1455 to 1478 (LESTPAESSEGLDPKDATDPVYKT), and 1571 to 1601 (QRHNLQPFHPKLGDVTDADSEADENEQVSAV). Low complexity-rich tracts occupy residues 1229–1238 (SVASSLHSSP) and 1255–1274 (SAKSDNLSDSSHSEISSRSS). Residues 1586–1601 (TDADSEADENEQVSAV) are compositionally biased toward acidic residues.

Interacts with the second PDZ domain of human PTP1e. As to expression, isoform 3 has highest expression levels in the brain, heart, liver, lung and placenta and is barely detectable in skeletal muscle, kidney and pancreas.

The protein resides in the cytoplasm. It localises to the cell membrane. Guanine nucleotide exchange factor (GEF) for Rap1A, Rap2A and M-Ras GTPases. Does not interact with cAMP. This chain is Rap guanine nucleotide exchange factor 6 (RAPGEF6), found in Homo sapiens (Human).